The sequence spans 370 residues: N-acyl-L-amino acid amidohydrolase (370 aa).

This sequence belongs to the peptidase M20 family. In terms of assembly, homotetramer. The cofactor is Co(2+).

The catalysed reaction is an N-acyl-L-amino acid + H2O = an L-alpha-amino acid + a carboxylate. It catalyses the reaction an N-acetyl-L-cysteine-S-conjugate + H2O = an S-substituted L-cysteine + acetate. Hydrolyzes most efficiently N-acetyl derivatives of aromatic amino acids but is also active on other amino acids. L-stereospecific. The protein is N-acyl-L-amino acid amidohydrolase (amaA) of Geobacillus stearothermophilus (Bacillus stearothermophilus).